We begin with the raw amino-acid sequence, 388 residues long: Succinyl-diaminopimelate desuccinylase (388 aa).

His72 is a Zn(2+) binding site. Asp74 is a catalytic residue. Asp105 contributes to the Zn(2+) binding site. Residue Glu139 is the Proton acceptor of the active site. Zn(2+) is bound by residues Glu140, Glu168, and His353.

The protein belongs to the peptidase M20A family. DapE subfamily. As to quaternary structure, homodimer. It depends on Zn(2+) as a cofactor. The cofactor is Co(2+).

It carries out the reaction N-succinyl-(2S,6S)-2,6-diaminopimelate + H2O = (2S,6S)-2,6-diaminopimelate + succinate. The protein operates within amino-acid biosynthesis; L-lysine biosynthesis via DAP pathway; LL-2,6-diaminopimelate from (S)-tetrahydrodipicolinate (succinylase route): step 3/3. Functionally, catalyzes the hydrolysis of N-succinyl-L,L-diaminopimelic acid (SDAP), forming succinate and LL-2,6-diaminopimelate (DAP), an intermediate involved in the bacterial biosynthesis of lysine and meso-diaminopimelic acid, an essential component of bacterial cell walls. This chain is Succinyl-diaminopimelate desuccinylase, found in Orientia tsutsugamushi (strain Boryong) (Rickettsia tsutsugamushi).